The primary structure comprises 260 residues: Tryptophan synthase alpha chain (260 aa).

Residues glutamate 52 and aspartate 63 each act as proton acceptor in the active site.

The protein belongs to the TrpA family. Tetramer of two alpha and two beta chains.

The enzyme catalyses (1S,2R)-1-C-(indol-3-yl)glycerol 3-phosphate + L-serine = D-glyceraldehyde 3-phosphate + L-tryptophan + H2O. The protein operates within amino-acid biosynthesis; L-tryptophan biosynthesis; L-tryptophan from chorismate: step 5/5. The alpha subunit is responsible for the aldol cleavage of indoleglycerol phosphate to indole and glyceraldehyde 3-phosphate. The polypeptide is Tryptophan synthase alpha chain (Streptococcus mutans serotype c (strain ATCC 700610 / UA159)).